Here is a 1347-residue protein sequence, read N- to C-terminus: Ubinuclein-2 (1347 aa).

The disordered stretch occupies residues 1-134 (MAEPRRVAFI…ETVRLELVLK (134 aa)). The residue at position 13 (Ser-13) is a Phosphoserine. Composition is skewed to basic and acidic residues over residues 16 to 37 (RRRE…EPPR) and 67 to 79 (SREK…EVSR). Over residues 93 to 110 (PEPPPPFPPLPLQPPPPR) the composition is skewed to pro residues. Basic and acidic residues predominate over residues 122-134 (PPRETVRLELVLK). At Thr-243 the chain carries Phosphothreonine. Ser-250 is subject to Phosphoserine. Residues 250 to 301 (SDTEEDDITDNQKHKPPKVPKIKEDDIEMKKRKRKEEGEKEKKPRKKVPKQL) form a disordered region. At Thr-252 the chain carries Phosphothreonine. Lys-272 participates in a covalent cross-link: Glycyl lysine isopeptide (Lys-Gly) (interchain with G-Cter in SUMO2). Phosphoserine occurs at positions 311, 416, 419, 422, and 584. Disordered stretches follow at residues 573–597 (LQTD…KRVI), 707–740 (ECSP…AAAS), 815–849 (LATP…DLAH), 880–913 (GLQR…HALG), 981–1006 (RLPL…TVPS), and 1035–1218 (ASPK…SSVV). The span at 574–584 (QTDEEREKNGS) shows a compositional bias: basic and acidic residues. A compositionally biased stretch (low complexity) spans 721-740 (VASVSGPPTSSSTAAIAAAS). A compositionally biased stretch (polar residues) spans 823 to 832 (STQTTHSSSL). Positions 880 to 911 (GLQRSSQIHTSSSSQTHVSSSSQAQIAASSHA) are enriched in low complexity. Positions 985–996 (STPSPGNGSQGS) are enriched in polar residues. Over residues 1035–1045 (ASPKLAASPKP) the composition is skewed to low complexity. Pro residues predominate over residues 1046-1060 (ATSPKPLPSPKPSAS). Composition is skewed to low complexity over residues 1061 to 1070 (PKPSLSAKPS) and 1077 to 1095 (SKSN…SSPN). Lys-1068 carries the N6-acetyllysine modification. 2 stretches are compositionally biased toward polar residues: residues 1101–1164 (GSHS…NSLS) and 1174–1185 (RGSNLNSSGANR). Ser-1123 carries the phosphoserine modification. Position 1148 is an N6-acetyllysine (Lys-1148).

It belongs to the ubinuclein family. As to expression, expressed in several cell lines tested, including primary and transformed cell lines.

The protein is Ubinuclein-2 (UBN2) of Homo sapiens (Human).